Reading from the N-terminus, the 342-residue chain is Alanine racemase (342 aa).

Catalysis depends on Lys33, which acts as the Proton acceptor; specific for D-alanine. N6-(pyridoxal phosphate)lysine is present on Lys33. Arg128 contacts substrate. Tyr240 acts as the Proton acceptor; specific for L-alanine in catalysis. A substrate-binding site is contributed by Met288.

Belongs to the alanine racemase family. Pyridoxal 5'-phosphate is required as a cofactor.

The enzyme catalyses L-alanine = D-alanine. It participates in amino-acid biosynthesis; D-alanine biosynthesis; D-alanine from L-alanine: step 1/1. In terms of biological role, catalyzes the interconversion of L-alanine and D-alanine. May also act on other amino acids. The protein is Alanine racemase (alr) of Jannaschia sp. (strain CCS1).